The following is a 183-amino-acid chain: Adenylate kinase (183 aa).

An ATP-binding site is contributed by 7 to 15 (GVAGVGKTT).

It belongs to the archaeal adenylate kinase family.

It is found in the cytoplasm. The enzyme catalyses AMP + ATP = 2 ADP. The sequence is that of Adenylate kinase (adkA) from Thermoplasma acidophilum (strain ATCC 25905 / DSM 1728 / JCM 9062 / NBRC 15155 / AMRC-C165).